The chain runs to 912 residues: Coiled-coil domain-containing protein 162 (912 aa).

Coiled-coil stretches lie at residues 1–35 (MFKS…FSFA) and 220–276 (VLLG…VVMS).

This is Coiled-coil domain-containing protein 162 from Mus musculus (Mouse).